Consider the following 468-residue polypeptide: DNA polymerase IV 1 (468 aa).

The 183-residue stretch at 6–188 (VLHLDMDAFF…LPVRRLWGIG (183 aa)) folds into the UmuC domain. Mg(2+)-binding residues include Asp-10 and Asp-105. Glu-106 is an active-site residue.

It belongs to the DNA polymerase type-Y family. In terms of assembly, monomer. Mg(2+) is required as a cofactor.

The protein localises to the cytoplasm. The enzyme catalyses DNA(n) + a 2'-deoxyribonucleoside 5'-triphosphate = DNA(n+1) + diphosphate. Functionally, poorly processive, error-prone DNA polymerase involved in untargeted mutagenesis. Copies undamaged DNA at stalled replication forks, which arise in vivo from mismatched or misaligned primer ends. These misaligned primers can be extended by PolIV. Exhibits no 3'-5' exonuclease (proofreading) activity. May be involved in translesional synthesis, in conjunction with the beta clamp from PolIII. The polypeptide is DNA polymerase IV 1 (dinB1) (Mycobacterium tuberculosis (strain CDC 1551 / Oshkosh)).